The chain runs to 158 residues: NAD(P)H-quinone oxidoreductase subunit J, chloroplastic (158 aa).

This sequence belongs to the complex I 30 kDa subunit family. As to quaternary structure, NDH is composed of at least 16 different subunits, 5 of which are encoded in the nucleus.

It is found in the plastid. It localises to the chloroplast thylakoid membrane. It carries out the reaction a plastoquinone + NADH + (n+1) H(+)(in) = a plastoquinol + NAD(+) + n H(+)(out). The enzyme catalyses a plastoquinone + NADPH + (n+1) H(+)(in) = a plastoquinol + NADP(+) + n H(+)(out). NDH shuttles electrons from NAD(P)H:plastoquinone, via FMN and iron-sulfur (Fe-S) centers, to quinones in the photosynthetic chain and possibly in a chloroplast respiratory chain. The immediate electron acceptor for the enzyme in this species is believed to be plastoquinone. Couples the redox reaction to proton translocation, and thus conserves the redox energy in a proton gradient. This chain is NAD(P)H-quinone oxidoreductase subunit J, chloroplastic, found in Morus indica (Mulberry).